We begin with the raw amino-acid sequence, 149 residues long: Protein SprT-like (149 aa).

The region spanning 6–147 is the SprT-like domain; that stretch reads LQKLTEDISL…CGKCRGKIKR (142 aa). Residue His-67 participates in Zn(2+) binding. Glu-68 is a catalytic residue. A Zn(2+)-binding site is contributed by His-71.

It belongs to the SprT family. Zn(2+) serves as cofactor.

The protein localises to the cytoplasm. The protein is Protein SprT-like of Bacillus velezensis (strain DSM 23117 / BGSC 10A6 / LMG 26770 / FZB42) (Bacillus amyloliquefaciens subsp. plantarum).